Consider the following 151-residue polypeptide: Putative calcium-binding protein CML23 (151 aa).

EF-hand domains follow at residues 2–37 (VASD…SLGE), 39–74 (MPDE…MEAD), 84–119 (ETCR…LGTH), and 120–151 (LDVA…MMMA). Ca(2+)-binding residues include Asp15, Asp17, Asp19, Lys21, Glu26, Asp52, Asp54, Asp56, and Glu63. 4 residues coordinate Ca(2+): Asp133, Asn135, Asp137, and Glu144.

In terms of biological role, potential calcium sensor. In Oryza sativa subsp. japonica (Rice), this protein is Putative calcium-binding protein CML23 (CML23).